We begin with the raw amino-acid sequence, 1677 residues long: Vitellogenin (1677 aa).

The N-terminal stretch at 1–8 (LTIALVGS) is a signal peptide. Positions 17-655 (FSGSKTYQYK…NAASILPSAV (639 aa)) constitute a Vitellogenin domain. Disordered stretches follow at residues 1089-1232 (TLRG…SEEI) and 1252-1280 (FQNK…SKQD). The segment covering 1098–1122 (SSSSSSSSSSSSSSSSSSSSSSQQS) has biased composition (low complexity). Positions 1123 to 1145 (RMEKRMEQDKLTENLERDRDHMR) are enriched in basic and acidic residues. The span at 1169 to 1196 (SSSSSSSSSSSGSNSSSSSSSSSSSSSR) shows a compositional bias: low complexity. 4 N-linked (GlcNAc...) asparagine glycosylation sites follow: asparagine 1182, asparagine 1202, asparagine 1217, and asparagine 1218. The segment covering 1197 to 1212 (SHNHRNNTRTLSKSKR) has biased composition (basic residues). Low complexity-rich tracts occupy residues 1215-1229 (NNNN…SSSS) and 1260-1273 (SSSS…SSQS). One can recognise a VWFD domain in the interval 1490-1675 (SKCVAQENKF…TATEAASFCV (186 aa)). Disulfide bonds link cysteine 1492-cysteine 1631 and cysteine 1515-cysteine 1674. Over residues 1636–1649 (GERRKEFRMPDGRQ) the composition is skewed to basic and acidic residues. The disordered stretch occupies residues 1636–1659 (GERRKEFRMPDGRQARGPSVSPTP).

In terms of processing, phosvitin, an egg yolk storage protein, is one of the most highly phosphorylated (10%) proteins in nature. Found in liver, testis and undifferentiated gonads of estrogen-treated fish. Not detected in the brain and spleen.

Functionally, precursor of the major egg-yolk proteins that are sources of nutrients during early development of oviparous organisms. The chain is Vitellogenin from Acipenser transmontanus (White sturgeon).